The following is a 64-amino-acid chain: UPF0434 protein Bcen_1934 (64 aa).

Belongs to the UPF0434 family.

The polypeptide is UPF0434 protein Bcen_1934 (Burkholderia orbicola (strain AU 1054)).